The following is an 89-amino-acid chain: Small ribosomal subunit protein uS14 (89 aa).

The protein belongs to the universal ribosomal protein uS14 family. In terms of assembly, part of the 30S ribosomal subunit. Contacts proteins S3 and S10.

In terms of biological role, binds 16S rRNA, required for the assembly of 30S particles and may also be responsible for determining the conformation of the 16S rRNA at the A site. This is Small ribosomal subunit protein uS14 from Flavobacterium psychrophilum (strain ATCC 49511 / DSM 21280 / CIP 103535 / JIP02/86).